The following is a 178-amino-acid chain: uncharacterized protein (178 aa).

The tract at residues 152–178 is disordered; sequence KKLKGAEPKEHQAPNFEPPTEIFPESN.

It belongs to the EUO family.

This is an uncharacterized protein from Chlamydia pneumoniae (Chlamydophila pneumoniae).